The sequence spans 449 residues: Glutamyl-tRNA reductase (449 aa).

Substrate-binding positions include 58–61, serine 121, 126–128, and glutamine 132; these read TCNR and ETQ. The active-site Nucleophile is the cysteine 59. NADP(+) is bound at residue 203–208; the sequence is GLGEMA.

The protein belongs to the glutamyl-tRNA reductase family. In terms of assembly, homodimer.

The catalysed reaction is (S)-4-amino-5-oxopentanoate + tRNA(Glu) + NADP(+) = L-glutamyl-tRNA(Glu) + NADPH + H(+). It functions in the pathway porphyrin-containing compound metabolism; protoporphyrin-IX biosynthesis; 5-aminolevulinate from L-glutamyl-tRNA(Glu): step 1/2. Catalyzes the NADPH-dependent reduction of glutamyl-tRNA(Glu) to glutamate 1-semialdehyde (GSA). The sequence is that of Glutamyl-tRNA reductase from Helicobacter pylori (strain G27).